The sequence spans 270 residues: Nuclear receptor-interacting protein 2 (270 aa).

A compositionally biased stretch (basic and acidic residues) spans 1 to 27 (MSTGQEARRDEGDSRKEQEASLRDRAH). The tract at residues 1 to 33 (MSTGQEARRDEGDSRKEQEASLRDRAHLSQQRQ) is disordered. The segment at 61–99 (KDLQPHSVIQRRLVEGNQRRLQGESPLLQALIRGHDSSR) is interaction with NR1F2. Positions 192–196 (LQTLL) match the LXXLL motif motif.

As to quaternary structure, interacts with NR1F2, RARA and THRB in a ligand-dependent manner. As to expression, expression is restricted to the central nervous system (neurons in the dentate gyrus of the hippocampus, the amygdala, thalamic and hypothalamic regions).

It localises to the nucleus. Its function is as follows. Down-regulates transcriptional activation by nuclear receptors, such as NR1F2. In Mus musculus (Mouse), this protein is Nuclear receptor-interacting protein 2 (Nrip2).